The following is a 169-amino-acid chain: MKNMIALTGIGYDIHRFAEVPRPLMLGGVHIPSSRGLDGHSDADVLCHAIADALLGAAGLPDIGYWFPPGDPSCKDIPSLDIVAKAVSLIRERGGRIVNVDSSLIAESPRISPYLEQMKGALGAALGISPVRVGIKATTNEQLGALGRREGIAAFAVAAILMPEDLTMP.

A divalent metal cation contacts are provided by D13 and H15. 4-CDP-2-C-methyl-D-erythritol 2-phosphate contacts are provided by residues 13 to 15 (DIH) and 40 to 41 (HS). H48 lines the a divalent metal cation pocket. 4-CDP-2-C-methyl-D-erythritol 2-phosphate contacts are provided by residues 62 to 64 (DIG), 138 to 141 (TTNE), and R148.

This sequence belongs to the IspF family. As to quaternary structure, homotrimer. Requires a divalent metal cation as cofactor.

It carries out the reaction 4-CDP-2-C-methyl-D-erythritol 2-phosphate = 2-C-methyl-D-erythritol 2,4-cyclic diphosphate + CMP. It functions in the pathway isoprenoid biosynthesis; isopentenyl diphosphate biosynthesis via DXP pathway; isopentenyl diphosphate from 1-deoxy-D-xylulose 5-phosphate: step 4/6. Its function is as follows. Involved in the biosynthesis of isopentenyl diphosphate (IPP) and dimethylallyl diphosphate (DMAPP), two major building blocks of isoprenoid compounds. Catalyzes the conversion of 4-diphosphocytidyl-2-C-methyl-D-erythritol 2-phosphate (CDP-ME2P) to 2-C-methyl-D-erythritol 2,4-cyclodiphosphate (ME-CPP) with a corresponding release of cytidine 5-monophosphate (CMP). The sequence is that of 2-C-methyl-D-erythritol 2,4-cyclodiphosphate synthase from Akkermansia muciniphila (strain ATCC BAA-835 / DSM 22959 / JCM 33894 / BCRC 81048 / CCUG 64013 / CIP 107961 / Muc).